A 193-amino-acid chain; its full sequence is Holliday junction branch migration complex subunit RuvA (193 aa).

The tract at residues 1-64 is domain I; that stretch reads MIGRIAGVLL…EDAHLLYGFG (64 aa). A domain II region spans residues 65-139; it reads TAEERSTFRE…GKIGADLGAM (75 aa). Residues 139-143 are flexible linker; that stretch reads MAGAA. Positions 144–193 are domain III; sequence SASDHASDILNALLALGYSEKEALTAVKNVPAGTGVSEGIKLALKALSKG.

It belongs to the RuvA family. As to quaternary structure, homotetramer. Forms an RuvA(8)-RuvB(12)-Holliday junction (HJ) complex. HJ DNA is sandwiched between 2 RuvA tetramers; dsDNA enters through RuvA and exits via RuvB. An RuvB hexamer assembles on each DNA strand where it exits the tetramer. Each RuvB hexamer is contacted by two RuvA subunits (via domain III) on 2 adjacent RuvB subunits; this complex drives branch migration. In the full resolvosome a probable DNA-RuvA(4)-RuvB(12)-RuvC(2) complex forms which resolves the HJ.

Its subcellular location is the cytoplasm. The RuvA-RuvB-RuvC complex processes Holliday junction (HJ) DNA during genetic recombination and DNA repair, while the RuvA-RuvB complex plays an important role in the rescue of blocked DNA replication forks via replication fork reversal (RFR). RuvA specifically binds to HJ cruciform DNA, conferring on it an open structure. The RuvB hexamer acts as an ATP-dependent pump, pulling dsDNA into and through the RuvAB complex. HJ branch migration allows RuvC to scan DNA until it finds its consensus sequence, where it cleaves and resolves the cruciform DNA. This is Holliday junction branch migration complex subunit RuvA from Paraburkholderia phytofirmans (strain DSM 17436 / LMG 22146 / PsJN) (Burkholderia phytofirmans).